The sequence spans 73 residues: Beta-1 adrenergic receptor (73 aa).

A helical membrane pass occupies residues 1 to 12; it reads ISALVSFLPILM. At 13–38 the chain is on the extracellular side; the sequence is HWWRAENDEARRCYNDPKCCDFVTNR. Residues Cys-25 and Cys-31 are joined by a disulfide bond. A helical membrane pass occupies residues 39–64; the sequence is AYAIASSVVSFYVPLCIMAFVYLRVF. Ser-44 provides a ligand contact to cyanopindolol. The Cytoplasmic portion of the chain corresponds to 65–73; it reads REAQKQVKK.

The protein belongs to the G-protein coupled receptor 1 family. Adrenergic receptor subfamily. ADRB1 sub-subfamily. Interacts (via C-terminus PDZ motif) with RAPGEF2; the interaction is direct. Interacts with GOPC, MAGI3 and DLG4. Homologous desensitization of the receptor is mediated by its phosphorylation by beta-adrenergic receptor kinase.

It localises to the cell membrane. The protein resides in the early endosome. Its function is as follows. Beta-adrenergic receptors mediate the catecholamine-induced activation of adenylate cyclase through the action of G proteins. This receptor binds epinephrine and norepinephrine with approximately equal affinity. Mediates Ras activation through G(s)-alpha- and cAMP-mediated signaling. In dorsal pons neurons, involved in the regulation of sleep/wake behaviors. This is Beta-1 adrenergic receptor (ADRB1) from Meriones unguiculatus (Mongolian jird).